The following is a 68-amino-acid chain: Small integral membrane protein 10-like protein 3 (68 aa).

Expressed specifically in salivary glands (at protein level).

This chain is Small integral membrane protein 10-like protein 3, found in Mus musculus (Mouse).